We begin with the raw amino-acid sequence, 695 residues long: G-protein coupled receptor-associated protein LMBRD2 (695 aa).

Topologically, residues 1–5 (MSGAA) are extracellular. Residues 6 to 21 (LGLEIVFVFFLALFLL) traverse the membrane as a helical segment. Over 22-32 (HRYGDFKKQHR) the chain is Cytoplasmic. Residues 33–53 (LVIIGTLLAWYLCFLIVFILP) traverse the membrane as a helical segment. Over 54-105 (LDVSTTIYNRCKHAAANSSPPENSNITGLYATANPVPSQHPCFKPWSYIPDG) the chain is Extracellular. Asparagine 78 carries an N-linked (GlcNAc...) asparagine glycan. Residues 106–126 (IMPIFWRVVYWTSQFLTWILL) form a helical membrane-spanning segment. At 127 to 150 (PFMQSYARSGGFSITGKIKTALIE) the chain is on the cytoplasmic side. Residues 151 to 171 (NAIYYGTYLLIFGAFLIYVAV) traverse the membrane as a helical segment. The Extracellular portion of the chain corresponds to 172–186 (NPHLHLEWNQLQTIG). A helical membrane pass occupies residues 187 to 207 (IAAANTWGLFLLVLLLGYGLV). Residues 208 to 387 (EIPRSYWNGA…ECLLRPWFYK (180 aa)) lie on the Cytoplasmic side of the membrane. The stretch at 227–262 (YFKAAKLMTEKADAEENLEDAMEEVRKVNESIKYNH) forms a coiled coil. The helical transmembrane segment at 388-408 (ILAVVLSIFSVIVVWSECTFF) threads the bilayer. Residues 409-432 (STTPVLSLFAVFIQLAEKTYNYIY) are Extracellular-facing. A helical membrane pass occupies residues 433-453 (IEIACFLSIFFLSICVYSTVF). The Cytoplasmic portion of the chain corresponds to 454–473 (RIRVFNYYYLASHHQTDAYS). Residues 474 to 494 (LLFSGMLFCRLTPPLCLNFLG) traverse the membrane as a helical segment. The Extracellular portion of the chain corresponds to 495–521 (LTHMDSSISHKNTQPTAYTSIMGSMKV). Residues 522–542 (LSFIADGFYIYYPMLVVILCI) form a helical membrane-spanning segment. Topologically, residues 543-695 (ATYFSLGTRC…MSRSDIFNDV (153 aa)) are cytoplasmic. Residues 571 to 603 (LVNEGKELIRKEKRKRQRQEEGENRRREWKERY) adopt a coiled-coil conformation. A disordered region spans residues 581–628 (KEKRKRQRQEEGENRRREWKERYGHNREDSTRNRNIHTDPKESNFSDV). Basic and acidic residues predominate over residues 588-624 (RQEEGENRRREWKERYGHNREDSTRNRNIHTDPKESN). Serine 633 bears the Phosphoserine mark. The interval 662–682 (AETFTDDPLESESGRYQPGGR) is disordered.

The protein belongs to the LIMR family.

It localises to the cell membrane. In terms of biological role, recruited to ligand-activated beta-2 adrenergic receptor/ADRB2, it negatively regulates the adrenergic receptor signaling pathway. May also regulate other G-protein coupled receptors including type-1 angiotensin II receptor/AGTR1. This Homo sapiens (Human) protein is G-protein coupled receptor-associated protein LMBRD2.